Reading from the N-terminus, the 301-residue chain is Porphobilinogen deaminase (301 aa).

Position 240 is an S-(dipyrrolylmethanemethyl)cysteine (C240).

The protein belongs to the HMBS family. As to quaternary structure, monomer. Requires dipyrromethane as cofactor.

It catalyses the reaction 4 porphobilinogen + H2O = hydroxymethylbilane + 4 NH4(+). It functions in the pathway porphyrin-containing compound metabolism; protoporphyrin-IX biosynthesis; coproporphyrinogen-III from 5-aminolevulinate: step 2/4. Its function is as follows. Tetrapolymerization of the monopyrrole PBG into the hydroxymethylbilane pre-uroporphyrinogen in several discrete steps. This Clostridioides difficile (strain 630) (Peptoclostridium difficile) protein is Porphobilinogen deaminase.